A 206-amino-acid polypeptide reads, in one-letter code: Acireductone dioxygenase (206 aa).

The Fe(2+) site is built by H102, H104, E108, and H146. Ni(2+) is bound by residues H102, H104, E108, and H146.

The protein belongs to the acireductone dioxygenase (ARD) family. In terms of assembly, monomer. The cofactor is Fe(2+). Ni(2+) serves as cofactor.

The catalysed reaction is 1,2-dihydroxy-5-(methylsulfanyl)pent-1-en-3-one + O2 = 3-(methylsulfanyl)propanoate + CO + formate + 2 H(+). It carries out the reaction 1,2-dihydroxy-5-(methylsulfanyl)pent-1-en-3-one + O2 = 4-methylsulfanyl-2-oxobutanoate + formate + 2 H(+). The protein operates within amino-acid biosynthesis; L-methionine biosynthesis via salvage pathway; L-methionine from S-methyl-5-thio-alpha-D-ribose 1-phosphate: step 5/6. In terms of biological role, catalyzes 2 different reactions between oxygen and the acireductone 1,2-dihydroxy-3-keto-5-methylthiopentene (DHK-MTPene) depending upon the metal bound in the active site. Fe-containing acireductone dioxygenase (Fe-ARD) produces formate and 2-keto-4-methylthiobutyrate (KMTB), the alpha-ketoacid precursor of methionine in the methionine recycle pathway. Ni-containing acireductone dioxygenase (Ni-ARD) produces methylthiopropionate, carbon monoxide and formate, and does not lie on the methionine recycle pathway. This Frankia alni (strain DSM 45986 / CECT 9034 / ACN14a) protein is Acireductone dioxygenase.